Consider the following 141-residue polypeptide: Hemoglobin subunit alpha-A (141 aa).

Residues 1–141 (VLSAADKTNV…VGTVLTAKYR (141 aa)) form the Globin domain. H58 is a binding site for O2. Residue H87 coordinates heme b.

This sequence belongs to the globin family. In terms of assembly, heterotetramer of two alpha chains and two beta chains. As to expression, red blood cells.

Its function is as follows. Involved in oxygen transport from the lung to the various peripheral tissues. The protein is Hemoglobin subunit alpha-A (HBAA) of Turdus merula (Common blackbird).